Consider the following 116-residue polypeptide: Large ribosomal subunit protein bL20c (116 aa).

Belongs to the bacterial ribosomal protein bL20 family.

Its subcellular location is the plastid. The protein localises to the chloroplast. In terms of biological role, binds directly to 23S ribosomal RNA and is necessary for the in vitro assembly process of the 50S ribosomal subunit. It is not involved in the protein synthesizing functions of that subunit. The polypeptide is Large ribosomal subunit protein bL20c (Cyanidioschyzon merolae (strain NIES-3377 / 10D) (Unicellular red alga)).